We begin with the raw amino-acid sequence, 325 residues long: Lipid droplet-associated hydrolase (325 aa).

Ser139 (nucleophile) is an active-site residue. Active-site charge relay system residues include Asp271 and His300.

It belongs to the AB hydrolase superfamily. LDAH family. As to expression, present in macrophage-rich areas in atherosclerotic lesions (at protein level). Expressed in monocytes and monocyte-derived macrophages (at protein level).

Its subcellular location is the lipid droplet. It is found in the endoplasmic reticulum. The enzyme catalyses a cholesterol ester + H2O = cholesterol + a fatty acid + H(+). Functionally, probable serine lipid hydrolase associated with lipid droplets. Has low cholesterol esterase activity. Appears to lack triglyceride lipase activity. Involved in cholesterol and triglyceride homeostasis; has opposing effects, stimulating cellular triglyceride accumulation and cellular cholesterol release. Acts antagonistically with PNPLA2/ATGL in regulation of cellular lipid stores. May regulate triglyceride accumulation indirectly through stimulation of PNPLA2/ATGL ubiquitination and proteasomal degradation. Promotes microtubule-dependent lipid droplet fusion. Highly expressed in macrophage-rich areas in atherosclerotic lesions, suggesting that it could promote cholesterol ester turnover in macrophages. The sequence is that of Lipid droplet-associated hydrolase from Homo sapiens (Human).